The primary structure comprises 114 residues: MSISQIDDYRTQYTLETFSFLPELTADEIYDQIVYIINQGWSPALEHEEPAKASDHYWGMWKLPMFGTRDPNEVLAEIDACRQAYPNHLIRLVGYDNYTQCQGHNFVVYRPRGM.

Belongs to the RuBisCO small chain family. Heterohexadecamer of 8 large and 8 small subunits. Forms a CsoS2-CsoS1-RuBisCO complex.

The protein localises to the carboxysome. In terms of biological role, ruBisCO catalyzes two reactions: the carboxylation of D-ribulose 1,5-bisphosphate, the primary event in carbon dioxide fixation, as well as the oxidative fragmentation of the pentose substrate. Both reactions occur simultaneously and in competition at the same active site. Although the small subunit is not catalytic it is essential for maximal activity. Functionally, replacing the endogenous type I ccbLS genes in H.neapolitanus with this carboxysomally targeted enzyme reconstitutes RuBisCO with about 25% of normal activity; the active enzyme is targeted to carboxysomes. This is Ribulose bisphosphate carboxylase small subunit 2 from Hydrogenovibrio crunogenus (strain DSM 25203 / XCL-2) (Thiomicrospira crunogena).